We begin with the raw amino-acid sequence, 189 residues long: Elongation factor P (189 aa).

The protein belongs to the elongation factor P family.

It localises to the cytoplasm. Its pathway is protein biosynthesis; polypeptide chain elongation. In terms of biological role, involved in peptide bond synthesis. Stimulates efficient translation and peptide-bond synthesis on native or reconstituted 70S ribosomes in vitro. Probably functions indirectly by altering the affinity of the ribosome for aminoacyl-tRNA, thus increasing their reactivity as acceptors for peptidyl transferase. This Rhizobium leguminosarum bv. trifolii (strain WSM2304) protein is Elongation factor P.